The sequence spans 396 residues: Ribosomal RNA large subunit methyltransferase I (396 aa).

The PUA domain maps to 2–81 (SVRLVLAKGR…ESIDIAFFTR (80 aa)).

It belongs to the methyltransferase superfamily. RlmI family.

Its subcellular location is the cytoplasm. It catalyses the reaction cytidine(1962) in 23S rRNA + S-adenosyl-L-methionine = 5-methylcytidine(1962) in 23S rRNA + S-adenosyl-L-homocysteine + H(+). Its function is as follows. Specifically methylates the cytosine at position 1962 (m5C1962) of 23S rRNA. This Escherichia coli O127:H6 (strain E2348/69 / EPEC) protein is Ribosomal RNA large subunit methyltransferase I.